We begin with the raw amino-acid sequence, 341 residues long: tRNA N6-adenosine threonylcarbamoyltransferase (341 aa).

Fe cation-binding residues include histidine 115 and histidine 119. Residues 138 to 142, aspartate 171, glycine 184, aspartate 188, and asparagine 279 each bind substrate; that span reads VVSGG. Aspartate 307 lines the Fe cation pocket.

This sequence belongs to the KAE1 / TsaD family. Fe(2+) is required as a cofactor.

The protein localises to the cytoplasm. It carries out the reaction L-threonylcarbamoyladenylate + adenosine(37) in tRNA = N(6)-L-threonylcarbamoyladenosine(37) in tRNA + AMP + H(+). Its function is as follows. Required for the formation of a threonylcarbamoyl group on adenosine at position 37 (t(6)A37) in tRNAs that read codons beginning with adenine. Is involved in the transfer of the threonylcarbamoyl moiety of threonylcarbamoyl-AMP (TC-AMP) to the N6 group of A37, together with TsaE and TsaB. TsaD likely plays a direct catalytic role in this reaction. The chain is tRNA N6-adenosine threonylcarbamoyltransferase from Clostridium novyi (strain NT).